The sequence spans 105 residues: U21-theraphotoxin-Cg1a 4 (105 aa).

The N-terminal stretch at 1–21 (MKVSVLITLAVLGVMFLLTSA) is a signal peptide. The propeptide occupies 22–48 (EERGSDQMDSPAWLKSMEIIFQSEERE). 3 cysteine pairs are disulfide-bonded: Cys49–Cys63, Cys56–Cys68, and Cys62–Cys76. At Val82 the chain carries Valine amide. Positions 83-105 (GKWEMLINMNIFRIVFSYSMCTV) are excised as a propeptide.

It belongs to the neurotoxin 10 (Hwtx-1) family. 05 (F4a) subfamily. Expressed by the venom gland.

Its subcellular location is the secreted. Its function is as follows. Probable ion channel inhibitor. This Chilobrachys guangxiensis (Chinese earth tiger tarantula) protein is U21-theraphotoxin-Cg1a 4.